Consider the following 484-residue polypeptide: HTH-type transcriptional regulator TauR (484 aa).

An HTH gntR-type domain is found at 16 to 84 (GSLQHRLRQM…GRSGTFVSAA (69 aa)). The H-T-H motif DNA-binding region spans 44-63 (TRALAAHLGVARITVTLAYA). Lysine 330 bears the N6-(pyridoxal phosphate)lysine mark.

In the C-terminal section; belongs to the class-I pyridoxal-phosphate-dependent aminotransferase family. The cofactor is pyridoxal 5'-phosphate.

Functionally, transcriptional activator, which is essential for taurine-dependent expression of the tpa-tauR-xsc operon. Acts by binding to direct repeats in the promoter region. In Rhodobacter capsulatus (strain ATCC BAA-309 / NBRC 16581 / SB1003), this protein is HTH-type transcriptional regulator TauR.